Reading from the N-terminus, the 228-residue chain is Cytidylate kinase (228 aa).

An ATP-binding site is contributed by 17–25 (GPTASGKGT).

The protein belongs to the cytidylate kinase family. Type 1 subfamily.

It localises to the cytoplasm. It catalyses the reaction CMP + ATP = CDP + ADP. The enzyme catalyses dCMP + ATP = dCDP + ADP. This chain is Cytidylate kinase, found in Burkholderia thailandensis (strain ATCC 700388 / DSM 13276 / CCUG 48851 / CIP 106301 / E264).